We begin with the raw amino-acid sequence, 128 residues long: UPF0102 protein PSPTO_4420 (128 aa).

The protein belongs to the UPF0102 family.

This Pseudomonas syringae pv. tomato (strain ATCC BAA-871 / DC3000) protein is UPF0102 protein PSPTO_4420.